We begin with the raw amino-acid sequence, 761 residues long: Autophagy-related protein 13 (761 aa).

Composition is skewed to low complexity over residues 1-10 (MLSDFKQQQQ), 290-303 (SSSVSPLSSGTSLK), and 327-340 (STSPPVQSPSISQP). Disordered stretches follow at residues 1–25 (MLSDFKQQQQQKHHSHNPPNSHDDT), 277–367 (FHKR…SNKS), 398–456 (ISGT…QSDL), 488–507 (DLRLGGGGGGGNSSVHNMSI), 544–642 (HSSR…SSIS), and 691–761 (YQNV…SRNF). Polar residues-rich tracts occupy residues 344 to 367 (PIQNQPSVPSSSLERRVSITSNKS) and 400 to 411 (GTSVPRSFSSST). Residues 429 to 444 (RFASSFGSRASRRYSS) show a composition bias toward low complexity. Over residues 445-456 (TSIRQQTPQSDL) the composition is skewed to polar residues. Residues 566–590 (QQQQQQQQNQQQSQSPHTNTTSSIH) show a composition bias toward low complexity. Over residues 600 to 613 (RMKDARPRSEDHQQ) the composition is skewed to basic and acidic residues. A compositionally biased stretch (polar residues) spans 614 to 631 (TKFSAARRSSNISPTTAV). Over residues 632 to 642 (PSSIGTPSSIS) the composition is skewed to low complexity. Over residues 695–709 (FDDDDEDDNDEEEGD) the composition is skewed to acidic residues. Positions 710 to 720 (REGNQLHEGRN) are enriched in basic and acidic residues. Residues 721–730 (STESSQNQSK) show a composition bias toward polar residues.

It belongs to the ATG13 family. Fungi subfamily. In terms of assembly, interacts with ATG1 to form the ATG1-ATG13 kinase complex.

It is found in the cytoplasm. The protein localises to the preautophagosomal structure. Its function is as follows. Plays a key role in autophagy. Activates the atg1 kinase in a nutritional condition dependent manner through the TOR pathway, leading to autophagy. Also involved in cytoplasm to vacuole transport (Cvt) and more specifically in Cvt vesicle formation. Seems to play a role in the switching machinery regulating the conversion between the Cvt pathway and autophagy. Finally, plays an important role in biofilm formation and resistance to antifungal compounds such as fluconazole, itraconazole, terbinafine and caspofungin. The sequence is that of Autophagy-related protein 13 from Candida albicans (strain SC5314 / ATCC MYA-2876) (Yeast).